The chain runs to 201 residues: MIMSVCLPWLARCRRFLIVSLAFAMLLLGIWGTLPFSLSDHGTAIAALEDDRYDGNIFVVYAGNGSLVPPRLNLRESFERKLPVILVYYLDDSKDCKQYAFIVSRMQEFYGRVASIIPVSVDSIPDQKRFRRDEPGYYYSGGVPQTVILDKSGKKIFDAQGALKFEVVDDVLRDLFDLLPRSESMELKQRTYNEFNSELVD.

Residues 16–36 (FLIVSLAFAMLLLGIWGTLPF) form a helical membrane-spanning segment.

It is found in the cellular thylakoid membrane. The sequence is that of Thylakoid membrane protein slr1796 from Synechocystis sp. (strain ATCC 27184 / PCC 6803 / Kazusa).